A 407-amino-acid chain; its full sequence is 1-deoxy-D-xylulose 5-phosphate reductoisomerase (407 aa).

Positions 25, 26, 27, 28, 53, and 136 each coordinate NADPH. A 1-deoxy-D-xylulose 5-phosphate-binding site is contributed by K137. E138 provides a ligand contact to NADPH. D162 contributes to the Mn(2+) binding site. 1-deoxy-D-xylulose 5-phosphate is bound by residues S163, E164, S188, and H211. E164 lines the Mn(2+) pocket. Position 217 (G217) interacts with NADPH. Positions 224, 229, 230, and 233 each coordinate 1-deoxy-D-xylulose 5-phosphate. Residue E233 coordinates Mn(2+).

The protein belongs to the DXR family. It depends on Mg(2+) as a cofactor. Mn(2+) is required as a cofactor.

It carries out the reaction 2-C-methyl-D-erythritol 4-phosphate + NADP(+) = 1-deoxy-D-xylulose 5-phosphate + NADPH + H(+). The protein operates within isoprenoid biosynthesis; isopentenyl diphosphate biosynthesis via DXP pathway; isopentenyl diphosphate from 1-deoxy-D-xylulose 5-phosphate: step 1/6. Catalyzes the NADPH-dependent rearrangement and reduction of 1-deoxy-D-xylulose-5-phosphate (DXP) to 2-C-methyl-D-erythritol 4-phosphate (MEP). The sequence is that of 1-deoxy-D-xylulose 5-phosphate reductoisomerase from Nitrobacter hamburgensis (strain DSM 10229 / NCIMB 13809 / X14).